The primary structure comprises 381 residues: 3-dehydroquinate synthase (381 aa).

NAD(+) is bound by residues 81 to 86, 115 to 119, 139 to 140, lysine 152, and lysine 161; these read EGEVSK, GVVGD, and TS. Residues glutamate 194, histidine 256, and histidine 274 each coordinate Zn(2+).

The protein belongs to the sugar phosphate cyclases superfamily. Dehydroquinate synthase family. The cofactor is Co(2+). It depends on Zn(2+) as a cofactor. Requires NAD(+) as cofactor.

It is found in the cytoplasm. It carries out the reaction 7-phospho-2-dehydro-3-deoxy-D-arabino-heptonate = 3-dehydroquinate + phosphate. It participates in metabolic intermediate biosynthesis; chorismate biosynthesis; chorismate from D-erythrose 4-phosphate and phosphoenolpyruvate: step 2/7. Its function is as follows. Catalyzes the conversion of 3-deoxy-D-arabino-heptulosonate 7-phosphate (DAHP) to dehydroquinate (DHQ). In Rhodopseudomonas palustris (strain BisA53), this protein is 3-dehydroquinate synthase.